Reading from the N-terminus, the 35-residue chain is Photosystem II reaction center protein T (35 aa).

The chain crosses the membrane as a helical span at residues 3-23 (ALVYTFLLVSTLGIIFFAIFF).

The protein belongs to the PsbT family. As to quaternary structure, PSII is composed of 1 copy each of membrane proteins PsbA, PsbB, PsbC, PsbD, PsbE, PsbF, PsbH, PsbI, PsbJ, PsbK, PsbL, PsbM, PsbT, PsbY, PsbZ, Psb30/Ycf12, at least 3 peripheral proteins of the oxygen-evolving complex and a large number of cofactors. It forms dimeric complexes.

Its subcellular location is the plastid. The protein localises to the chloroplast thylakoid membrane. Its function is as follows. Found at the monomer-monomer interface of the photosystem II (PS II) dimer, plays a role in assembly and dimerization of PSII. PSII is a light-driven water plastoquinone oxidoreductase, using light energy to abstract electrons from H(2)O, generating a proton gradient subsequently used for ATP formation. The polypeptide is Photosystem II reaction center protein T (Gossypium barbadense (Sea Island cotton)).